Here is a 151-residue protein sequence, read N- to C-terminus: Deoxyuridine 5'-triphosphate nucleotidohydrolase (151 aa).

Residues 70 to 72 (RSG), N83, 87 to 89 (LID), and M97 each bind substrate.

The protein belongs to the dUTPase family. Mg(2+) serves as cofactor.

The enzyme catalyses dUTP + H2O = dUMP + diphosphate + H(+). Its pathway is pyrimidine metabolism; dUMP biosynthesis; dUMP from dCTP (dUTP route): step 2/2. Functionally, this enzyme is involved in nucleotide metabolism: it produces dUMP, the immediate precursor of thymidine nucleotides and it decreases the intracellular concentration of dUTP so that uracil cannot be incorporated into DNA. This is Deoxyuridine 5'-triphosphate nucleotidohydrolase from Haemophilus influenzae (strain 86-028NP).